The sequence spans 461 residues: Bacterial E1-like protein BilD (461 aa).

C385 acts as the Glycyl thioester intermediate in catalysis.

Functionally, component of the Bil (bacterial ISG15-like) antiviral defense system, composed of BilA, BilB, BilC and BilD. The Bil system specifically conjugates a ubiquitin-like moiety (bilA) to the bacteriophage central tail fiber (CTF, or tip attachment protein J) via reactions involving E1 (bilD) and E2 (bilB). Modifies CTF of phage SECphi27 and SECphi4, which probably interferes with assembly of the phage tail. Also modifies T5 baseplate hub protein pb3 (gene D16), but not gp27 of phage T6 (Bil defends against T6). BilD (E1) catalyzes the first step in conjugation. Activates ubiquitin-like BilA by first adenylating its C-terminal glycine residue with ATP, and then conjugates it to the side chain of a cysteine residue in E1 (this protein), yielding a ubiquitin-E1 thioester and free AMP. Bil-encoding bacteria produce mostly defective phage SECphi27, many of which have phage assembly defects, including no tails. SECphi27 phage progeny produced in E.coli with the Bil system inject less DNA into naive host cells, maybe because the phage are less able to adsorb and inject their DNA into host cells. Its function is as follows. Expression of the Bil system in E.coli (strain MG1655) confers about 100-fold resistance to phage SECphi27, SECphi18, SECphi6, SECphi4 and T5, but not to SECphi17. When cells expressing the Bil system are infected by phage SECphi27 at low multiplicity of infection (0.03 MOI) the culture survives, at 3.0 MOI the culture collapses at the same time as cells without the Bil system. In Collimonas sp. (strain OK412), this protein is Bacterial E1-like protein BilD.